The following is a 147-amino-acid chain: Myoglobin (147 aa).

One can recognise a Globin domain in the interval 2 to 141 (ADFDAVLKCW…VIADLEANYK (140 aa)). A nitrite-binding site is contributed by His-60. His-60 is a binding site for O2. Residue His-89 participates in heme b binding.

This sequence belongs to the globin family. As to quaternary structure, monomeric.

It localises to the cytoplasm. The protein resides in the sarcoplasm. It catalyses the reaction Fe(III)-heme b-[protein] + nitric oxide + H2O = Fe(II)-heme b-[protein] + nitrite + 2 H(+). It carries out the reaction H2O2 + AH2 = A + 2 H2O. Its function is as follows. Monomeric heme protein which primary function is to store oxygen and facilitate its diffusion within muscle tissues. Reversibly binds oxygen through a pentacoordinated heme iron and enables its timely and efficient release as needed during periods of heightened demand. Depending on the oxidative conditions of tissues and cells, and in addition to its ability to bind oxygen, it also has a nitrite reductase activity whereby it regulates the production of bioactive nitric oxide. Under stress conditions, like hypoxia and anoxia, it also protects cells against reactive oxygen species thanks to its pseudoperoxidase activity. In Auxis rochei (Bullet tuna), this protein is Myoglobin (mb).